Here is a 74-residue protein sequence, read N- to C-terminus: Translation initiation factor IF-1 (74 aa).

The S1-like domain maps to 1 to 72 (MGKEDVIRME…TRGRIVYRKK (72 aa)).

Belongs to the IF-1 family. In terms of assembly, component of the 30S ribosomal translation pre-initiation complex which assembles on the 30S ribosome in the order IF-2 and IF-3, IF-1 and N-formylmethionyl-tRNA(fMet); mRNA recruitment can occur at any time during PIC assembly.

The protein localises to the cytoplasm. Its function is as follows. One of the essential components for the initiation of protein synthesis. Stabilizes the binding of IF-2 and IF-3 on the 30S subunit to which N-formylmethionyl-tRNA(fMet) subsequently binds. Helps modulate mRNA selection, yielding the 30S pre-initiation complex (PIC). Upon addition of the 50S ribosomal subunit IF-1, IF-2 and IF-3 are released leaving the mature 70S translation initiation complex. The polypeptide is Translation initiation factor IF-1 (Thermotoga maritima (strain ATCC 43589 / DSM 3109 / JCM 10099 / NBRC 100826 / MSB8)).